Reading from the N-terminus, the 162-residue chain is Large ribosomal subunit protein uL11 (162 aa).

The segment at 1–27 (MAGTIEVLVPGGEANPGPPLGPELGPT) is disordered.

Belongs to the universal ribosomal protein uL11 family. Part of the 50S ribosomal subunit. Forms part of the ribosomal stalk which helps the ribosome interact with GTP-bound translation factors. Forms a heptameric L10(L12)2(L12)2(L12)2 complex, where L10 forms an elongated spine to which 3 L12 dimers bind in a sequential fashion.

Functionally, forms part of the ribosomal stalk which helps the ribosome interact with GTP-bound translation factors. The protein is Large ribosomal subunit protein uL11 of Haloarcula marismortui (strain ATCC 43049 / DSM 3752 / JCM 8966 / VKM B-1809) (Halobacterium marismortui).